Reading from the N-terminus, the 174-residue chain is DNA-directed RNA polymerase IV subunit 7 (174 aa).

This sequence belongs to the eukaryotic RPB7/RPC8 RNA polymerase subunit family. As to quaternary structure, component of the RNA polymerase IV complex. Interacts with NRPD1.

The protein localises to the nucleus. Functionally, DNA-dependent RNA polymerase catalyzes the transcription of DNA into RNA using the four ribonucleoside triphosphates as substrates. Component of RNA polymerase IV which mediates 24-nt short-interfering RNAs (siRNA) accumulation. Implicated in siRNA-directed heterochromatin formation through the action of DCL3 and AGO4, and subsequent DNA methylation-dependent silencing of targeted sequences. Essential component of a self-reinforcing loop coupling de novo DNA methylation to siRNA production. Required for intercellular but not intracellular RNA interference (RNAi) leading to systemic post-transcriptional gene silencing. Involved in the maintenance of post-transcriptional RNA silencing. The chain is DNA-directed RNA polymerase IV subunit 7 (NRPD7) from Arabidopsis thaliana (Mouse-ear cress).